Consider the following 89-residue polypeptide: Small ribosomal subunit protein uS15 (89 aa).

The protein belongs to the universal ribosomal protein uS15 family. Part of the 30S ribosomal subunit. Forms a bridge to the 50S subunit in the 70S ribosome, contacting the 23S rRNA.

Its function is as follows. One of the primary rRNA binding proteins, it binds directly to 16S rRNA where it helps nucleate assembly of the platform of the 30S subunit by binding and bridging several RNA helices of the 16S rRNA. Functionally, forms an intersubunit bridge (bridge B4) with the 23S rRNA of the 50S subunit in the ribosome. The polypeptide is Small ribosomal subunit protein uS15 (Buchnera aphidicola subsp. Cinara cedri (strain Cc)).